An 80-amino-acid chain; its full sequence is Beta-toxin KAaH1 (80 aa).

An N-terminal signal peptide occupies residues 1–22 (MMKLMLFSIIVILFSLIGSIHG). Positions 25-80 (VPGNYPLDSSDDTYLCAPLGENPFCIKICRKHGVKYGYCYAFQCWCEYLEDKNVKI) constitute an LCN-type CS-alpha/beta domain. 3 cysteine pairs are disulfide-bonded: C40–C63, C49–C68, and C53–C70.

Belongs to the long (3 C-C) scorpion toxin superfamily. Sodium/Potassium channel inhibitor family. Expressed by the venom gland.

Its subcellular location is the secreted. Functionally, inhibits the vertebrate potassium channels Kv1.1/KCNA1 and Kv1.3/KCNA3 in vitro with an IC(50) of 5.3 nM and 50.0 nM respectively. This is Beta-toxin KAaH1 from Androctonus australis (Sahara scorpion).